Reading from the N-terminus, the 851-residue chain is DNA mismatch repair protein MutS (851 aa).

Residue 614–621 (GPNMGGKS) coordinates ATP.

This sequence belongs to the DNA mismatch repair MutS family.

Functionally, this protein is involved in the repair of mismatches in DNA. It is possible that it carries out the mismatch recognition step. This protein has a weak ATPase activity. The chain is DNA mismatch repair protein MutS from Photorhabdus laumondii subsp. laumondii (strain DSM 15139 / CIP 105565 / TT01) (Photorhabdus luminescens subsp. laumondii).